A 239-amino-acid chain; its full sequence is 6-phosphogluconolactonase (239 aa).

This sequence belongs to the glucosamine/galactosamine-6-phosphate isomerase family. 6-phosphogluconolactonase subfamily.

It carries out the reaction 6-phospho-D-glucono-1,5-lactone + H2O = 6-phospho-D-gluconate + H(+). The protein operates within carbohydrate degradation; pentose phosphate pathway; D-ribulose 5-phosphate from D-glucose 6-phosphate (oxidative stage): step 2/3. In terms of biological role, hydrolysis of 6-phosphogluconolactone to 6-phosphogluconate. In Xylella fastidiosa (strain Temecula1 / ATCC 700964), this protein is 6-phosphogluconolactonase (pgl).